A 72-amino-acid polypeptide reads, in one-letter code: Translation initiation factor IF-1 (72 aa).

Positions 1–72 (MAKDDVIVVD…DKGRITHRYK (72 aa)) constitute an S1-like domain.

The protein belongs to the IF-1 family. In terms of assembly, component of the 30S ribosomal translation pre-initiation complex which assembles on the 30S ribosome in the order IF-2 and IF-3, IF-1 and N-formylmethionyl-tRNA(fMet); mRNA recruitment can occur at any time during PIC assembly.

It is found in the cytoplasm. One of the essential components for the initiation of protein synthesis. Stabilizes the binding of IF-2 and IF-3 on the 30S subunit to which N-formylmethionyl-tRNA(fMet) subsequently binds. Helps modulate mRNA selection, yielding the 30S pre-initiation complex (PIC). Upon addition of the 50S ribosomal subunit IF-1, IF-2 and IF-3 are released leaving the mature 70S translation initiation complex. The sequence is that of Translation initiation factor IF-1 from Aliarcobacter butzleri (strain RM4018) (Arcobacter butzleri).